Here is a 620-residue protein sequence, read N- to C-terminus: Glutathione-regulated potassium-efflux system protein KefC (620 aa).

Helical transmembrane passes span 4–24, 26–46, 54–74, 90–110, 114–134, 149–169, 178–198, 218–238, 270–290, 294–314, 327–347, and 359–379; these read HTLI…PIAV, LGLG…PWGL, SILH…GLEL, GALQ…LLGL, VAEL…MQAM, FAVL…IPLL, MGAF…VVLL, VFSA…EEVG, GLLL…GTLL, LRIV…LWLI, WFAV…GAAQ, and SLTL…VILN. Residues 399 to 518 form the RCK N-terminal domain; the sequence is QPRVIIAGFG…AGVEKPERET (120 aa). Residues 597-620 are disordered; that stretch reads GWQGTEEGKHTGNMADEPETKPSS.

It belongs to the monovalent cation:proton antiporter 2 (CPA2) transporter (TC 2.A.37) family. KefC subfamily. In terms of assembly, homodimer. Interacts with the regulatory subunit KefF.

Its subcellular location is the cell inner membrane. Its function is as follows. Pore-forming subunit of a potassium efflux system that confers protection against electrophiles. Catalyzes K(+)/H(+) antiport. This is Glutathione-regulated potassium-efflux system protein KefC from Escherichia coli O127:H6 (strain E2348/69 / EPEC).